Consider the following 120-residue polypeptide: Purkinje cell protein 2 (120 aa).

2 consecutive GoLoco domains span residues 7–29 (QEGF…RCSL) and 47–69 (MDNL…RVTV). Positions 16-120 (HVQGDRMEEQ…SSPQPQTQAP (105 aa)) are disordered. Residues 108–120 (RRNSSPQPQTQAP) show a composition bias toward polar residues. Ser-111 is modified (phosphoserine).

Cerebellum (Purkinje cells) and retinal bipolar neurons.

Functionally, may function as a cell-type specific modulator for G protein-mediated cell signaling. This is Purkinje cell protein 2 (Pcp2) from Mus musculus (Mouse).